The chain runs to 453 residues: MDRRIFGLENEYGVTCTFRGQRRLSPDEVARYLFRRVVSWGRSSNVFLRNGARLYLDVGSHPEYATPECDNVTELVTHDKAGERILEGLLVDAERRLHEEGIAGDVYLFKNNTDSAGNSYGCHENYLVARHGEFSRLADILIPFLVTRQLLCGAGKVLQTPRGAVYCVSQRAEHIWEGVSSATTRSRPIINTRDEPHADAERYRRLHVIVGDSNMSETTMLLKVGATDLVLRMIEAGTVMRDLTLENPIRAIREVSHDITGRRKVRLASGREASALEVQREYYEKAVDFVERRGIRTGTVEQVLELWGRTLDAIEAEDLDRIGTEIDWVMKYKLIERYRAKHNMTMSHPRVAQIDLAYHDIHRRRGLYYLLERKGQATRICNDLKIFEGKSVPPQTTRARLRGDFIRRAQEQRRDFTVDWVHLKLNDQAQRTVLCKDPFRSVDDRVEKLIAGM.

A Mg(2+)-binding site is contributed by Glu-9. Arg-53 serves as a coordination point for ATP. Position 55 (Tyr-55) interacts with Mg(2+). The Proton acceptor role is filled by Asp-57. Glu-63 provides a ligand contact to Mg(2+). ATP contacts are provided by Thr-66 and Trp-420.

The protein belongs to the Pup ligase/Pup deamidase family. Pup-conjugating enzyme subfamily.

The enzyme catalyses ATP + [prokaryotic ubiquitin-like protein]-L-glutamate + [protein]-L-lysine = ADP + phosphate + N(6)-([prokaryotic ubiquitin-like protein]-gamma-L-glutamyl)-[protein]-L-lysine.. The protein operates within protein degradation; proteasomal Pup-dependent pathway. Its pathway is protein modification; protein pupylation. Catalyzes the covalent attachment of the prokaryotic ubiquitin-like protein modifier Pup to the proteasomal substrate proteins, thereby targeting them for proteasomal degradation. This tagging system is termed pupylation. The ligation reaction involves the side-chain carboxylate of the C-terminal glutamate of Pup and the side-chain amino group of a substrate lysine. This is Pup--protein ligase from Streptomyces scabiei (strain 87.22).